A 226-amino-acid polypeptide reads, in one-letter code: Urease accessory protein UreF (226 aa).

It belongs to the UreF family. UreD, UreF and UreG form a complex that acts as a GTP-hydrolysis-dependent molecular chaperone, activating the urease apoprotein by helping to assemble the nickel containing metallocenter of UreC. The UreE protein probably delivers the nickel.

It localises to the cytoplasm. In terms of biological role, required for maturation of urease via the functional incorporation of the urease nickel metallocenter. The chain is Urease accessory protein UreF from Burkholderia vietnamiensis (strain G4 / LMG 22486) (Burkholderia cepacia (strain R1808)).